Reading from the N-terminus, the 202-residue chain is Dephospho-CoA kinase (202 aa).

The DPCK domain occupies 4–201; sequence VIGLTGGIAS…QKYLAMSKQN (198 aa). 12-17 contacts ATP; that stretch reads ASGKTT.

Belongs to the CoaE family.

It is found in the cytoplasm. The catalysed reaction is 3'-dephospho-CoA + ATP = ADP + CoA + H(+). It participates in cofactor biosynthesis; coenzyme A biosynthesis; CoA from (R)-pantothenate: step 5/5. Catalyzes the phosphorylation of the 3'-hydroxyl group of dephosphocoenzyme A to form coenzyme A. This is Dephospho-CoA kinase from Vibrio vulnificus (strain CMCP6).